A 386-amino-acid chain; its full sequence is O-phospho-L-seryl-tRNA:Cys-tRNA synthase (386 aa).

Pyridoxal 5'-phosphate contacts are provided by residues A89–R90, N196, and S219–H221. N6-(pyridoxal phosphate)lysine is present on K222.

The protein belongs to the SepCysS family. As to quaternary structure, homodimer. Interacts with SepRS. The cofactor is pyridoxal 5'-phosphate.

The enzyme catalyses O-phospho-L-seryl-tRNA(Cys) + hydrogen sulfide + H(+) = L-cysteinyl-tRNA(Cys) + phosphate. In terms of biological role, converts O-phospho-L-seryl-tRNA(Cys) (Sep-tRNA(Cys)) to L-cysteinyl-tRNA(Cys) (Cys-tRNA(Cys)). The sequence is that of O-phospho-L-seryl-tRNA:Cys-tRNA synthase from Methanosarcina acetivorans (strain ATCC 35395 / DSM 2834 / JCM 12185 / C2A).